The following is a 90-amino-acid chain: MANSAQAKKRARQNEKRELHNASQRSAVRTAVKKILKSLQANDSSAAQSAYQHAVQILDKAAGRRIIHPNKAARLKSRLSQKIKNLSSSQ.

The disordered stretch occupies residues 1–27; sequence MANSAQAKKRARQNEKRELHNASQRSA.

Belongs to the bacterial ribosomal protein bS20 family.

Binds directly to 16S ribosomal RNA. The protein is Small ribosomal subunit protein bS20 of Coxiella burnetii (strain CbuK_Q154) (Coxiella burnetii (strain Q154)).